Consider the following 431-residue polypeptide: Histidinol dehydrogenase (431 aa).

Residues Y127, Q189, and N212 each contribute to the NAD(+) site. Residues S237, Q259, and H262 each coordinate substrate. The Zn(2+) site is built by Q259 and H262. Active-site proton acceptor residues include E326 and H327. H327, D360, E414, and H419 together coordinate substrate. D360 serves as a coordination point for Zn(2+). H419 contributes to the Zn(2+) binding site.

This sequence belongs to the histidinol dehydrogenase family. Zn(2+) serves as cofactor.

The catalysed reaction is L-histidinol + 2 NAD(+) + H2O = L-histidine + 2 NADH + 3 H(+). It functions in the pathway amino-acid biosynthesis; L-histidine biosynthesis; L-histidine from 5-phospho-alpha-D-ribose 1-diphosphate: step 9/9. Functionally, catalyzes the sequential NAD-dependent oxidations of L-histidinol to L-histidinaldehyde and then to L-histidine. The polypeptide is Histidinol dehydrogenase (Xanthomonas campestris pv. campestris (strain ATCC 33913 / DSM 3586 / NCPPB 528 / LMG 568 / P 25)).